A 257-amino-acid chain; its full sequence is Protein Cmaq_1209 (257 aa).

Belongs to the CinA family.

This is Protein Cmaq_1209 from Caldivirga maquilingensis (strain ATCC 700844 / DSM 13496 / JCM 10307 / IC-167).